The sequence spans 317 residues: Nucleoside ABC transporter permease protein NupC (317 aa).

The next 10 helical transmembrane spans lie at 9-29 (IIVA…IGGV), 35-55 (GIVN…SVVF), 62-82 (MFGS…GALF), 98-118 (IVSG…LLQV), 132-151 (GYWN…IFFT), 155-172 (LPGF…YVLF), 203-223 (AGVL…AQAI), 225-245 (GNFS…AMIF), 251-271 (IGAM…VVGG), and 286-306 (MAPY…AIAP).

This sequence belongs to the binding-protein-dependent transport system permease family. In terms of assembly, the complex is composed of two ATP-binding proteins (NupA), two transmembrane proteins (NupB and NupC) and a solute-binding protein (BmpA).

Its subcellular location is the cell membrane. Part of an ABC transporter complex involved in the uptake of all common nucleosides. Responsible for the translocation of the substrate across the membrane. This chain is Nucleoside ABC transporter permease protein NupC, found in Lactococcus lactis subsp. cremoris (strain MG1363).